Here is a 484-residue protein sequence, read N- to C-terminus: Dolichyl-P-Man:Man5GlcNAc2-PP-dolichol alpha-1,3-mannosyltransferase l(2)not2 (484 aa).

Over 1–43 (MAPPKAASHRPAVRRKKSGTLVDSILDKYLNVRFFKYLLLEPA) the chain is Cytoplasmic. Residues 44 to 64 (ALPIVGLFVLLAELVINVVVI) form a helical membrane-spanning segment. Topologically, residues 65-97 (QRVPYTEIDWVAYMQECEGFLNGTTNYSLLRGD) are lumenal. A helical transmembrane segment spans residues 98–118 (TGPLVYPAAFVYIYSALYYVT). Residues 119–125 (SHGTNVR) are Cytoplasmic-facing. A helical transmembrane segment spans residues 126 to 146 (LAQYIFAGIYLLQLALVLRLY). Residues 147–171 (SKSRKVPPYVLVLSAFTSYRIHSIY) lie on the Lumenal side of the membrane. A helical membrane pass occupies residues 172 to 192 (VLRLFNDPVAVLLLYAALNLF). The Cytoplasmic portion of the chain corresponds to 193 to 211 (LDRRWTLGSTFFSLAVGVK). A helical membrane pass occupies residues 212–232 (MNILLFAPALLLFYLANLGLL). Residue R233 is a topological domain, lumenal. The helical transmembrane segment at 234–254 (TILQLAVCGVIQLLLGAPFLL) threads the bilayer. Residues 255-294 (THPVEYLRGSFDLGRIFEHKWTVNYRFLSRDVFENRTFHV) are Cytoplasmic-facing. A helical membrane pass occupies residues 295-315 (SLLGLHLLLLLAFAKPTWTFF). Residues 316 to 403 (QSYVRLRRIE…YGIHFDRCTQ (88 aa)) lie on the Lumenal side of the membrane. A helical membrane pass occupies residues 404-424 (LALLPFFLCNLVGVACSRSLH). The Cytoplasmic portion of the chain corresponds to 425-426 (YQ). The helical transmembrane segment at 427–447 (FYVWYFHSLPYLAWSTPYSLG) threads the bilayer. At 448-484 (VRCLILGLIEYCWNTYPSTNFSSAALHFTHIIPPYQL) the chain is on the lumenal side.

This sequence belongs to the glycosyltransferase ALG3 family.

Its subcellular location is the endoplasmic reticulum membrane. It catalyses the reaction an alpha-D-Man-(1-&gt;2)-alpha-D-Man-(1-&gt;2)-alpha-D-Man-(1-&gt;3)-[alpha-D-Man-(1-&gt;6)]-beta-D-Man-(1-&gt;4)-beta-D-GlcNAc-(1-&gt;4)-alpha-D-GlcNAc-diphospho-di-trans,poly-cis-dolichol + a di-trans,poly-cis-dolichyl beta-D-mannosyl phosphate = an alpha-D-Man-(1-&gt;2)-alpha-D-Man-(1-&gt;2)-alpha-D-Man-(1-&gt;3)-[alpha-D-Man-(1-&gt;3)-alpha-D-Man-(1-&gt;6)]-beta-D-Man-(1-&gt;4)-beta-D-GlcNAc-(1-&gt;4)-alpha-D-GlcNAc-diphospho-di-trans,poly-cis-dolichol + a di-trans,poly-cis-dolichyl phosphate + H(+). Its pathway is protein modification; protein glycosylation. Functionally, probable alpha-1,3-mannosyltransferase involved in the N-glycosylation pathway. Involved in glycosylation of the TNF receptor grnd, regulating its ligand affinity. Required for normal epithelial growth and architecture. Suppressor of JNK-dependent intestinal stem cell proliferation. This is Dolichyl-P-Man:Man5GlcNAc2-PP-dolichol alpha-1,3-mannosyltransferase l(2)not2 from Drosophila melanogaster (Fruit fly).